The chain runs to 209 residues: Ribosomal RNA large subunit methyltransferase E (209 aa).

Gly63, Trp65, Asp83, Asp99, and Asp124 together coordinate S-adenosyl-L-methionine. Lys164 serves as the catalytic Proton acceptor.

This sequence belongs to the class I-like SAM-binding methyltransferase superfamily. RNA methyltransferase RlmE family.

Its subcellular location is the cytoplasm. It catalyses the reaction uridine(2552) in 23S rRNA + S-adenosyl-L-methionine = 2'-O-methyluridine(2552) in 23S rRNA + S-adenosyl-L-homocysteine + H(+). Functionally, specifically methylates the uridine in position 2552 of 23S rRNA at the 2'-O position of the ribose in the fully assembled 50S ribosomal subunit. The chain is Ribosomal RNA large subunit methyltransferase E from Serratia proteamaculans (strain 568).